Here is a 275-residue protein sequence, read N- to C-terminus: MPELPEVETTRRGIDTVITGRTLRRLVVREARMRWPIPPALPDLLAGRTVLECGRRGKYLLLRFDHGVQIVHLGMSGSLRRVPEQEAPRKHGHVDWVFDHAVLRLHDPRRFGAVLWHPDEAGPIAAHPLLARLGIEPFDPRFDGRWLHAYFRGRRVAIKQALLAGDAVVGVGNIYASESLFRAGIDPRTAAQRVSAARCDRLAAAIRATLSDALDSGGSTLRDYVGASGEPGAYFAIHAAVYERAGLPCRVCGAPIRRLVQGQRATYFCPSCQKR.

The active-site Schiff-base intermediate with DNA is the proline 2. The Proton donor role is filled by glutamate 3. Lysine 58 acts as the Proton donor; for beta-elimination activity in catalysis. The DNA site is built by histidine 91, arginine 109, and arginine 154. Residues 240–274 (AVYERAGLPCRVCGAPIRRLVQGQRATYFCPSCQK) form an FPG-type zinc finger. Catalysis depends on arginine 264, which acts as the Proton donor; for delta-elimination activity.

It belongs to the FPG family. In terms of assembly, monomer. The cofactor is Zn(2+).

It carries out the reaction Hydrolysis of DNA containing ring-opened 7-methylguanine residues, releasing 2,6-diamino-4-hydroxy-5-(N-methyl)formamidopyrimidine.. The enzyme catalyses 2'-deoxyribonucleotide-(2'-deoxyribose 5'-phosphate)-2'-deoxyribonucleotide-DNA = a 3'-end 2'-deoxyribonucleotide-(2,3-dehydro-2,3-deoxyribose 5'-phosphate)-DNA + a 5'-end 5'-phospho-2'-deoxyribonucleoside-DNA + H(+). Functionally, involved in base excision repair of DNA damaged by oxidation or by mutagenic agents. Acts as a DNA glycosylase that recognizes and removes damaged bases. Has a preference for oxidized purines, such as 7,8-dihydro-8-oxoguanine (8-oxoG). Has AP (apurinic/apyrimidinic) lyase activity and introduces nicks in the DNA strand. Cleaves the DNA backbone by beta-delta elimination to generate a single-strand break at the site of the removed base with both 3'- and 5'-phosphates. The chain is Formamidopyrimidine-DNA glycosylase from Bordetella parapertussis (strain 12822 / ATCC BAA-587 / NCTC 13253).